Here is a 349-residue protein sequence, read N- to C-terminus: Green-sensitive opsin-4 (349 aa).

Residues 1–36 (MNGTEGNNFYIPLSNRTGLARSPYEYPQYYLAEPWQ) are Extracellular-facing. 2 N-linked (GlcNAc...) asparagine glycosylation sites follow: N2 and N15. The chain crosses the membrane as a helical span at residues 37-61 (FKLLAVYMFFLICLGFPINGLTLLV). Residues 62-73 (TAQHKKLRQPLN) lie on the Cytoplasmic side of the membrane. Residues 74–99 (FILVNLAVAGTIMVCFGFTVTFYTAI) traverse the membrane as a helical segment. The Extracellular segment spans residues 100–113 (NGYFVLGPTGCAIE). C110 and C187 are joined by a disulfide. Residues 114 to 133 (GFMATLGGEVALWSLVVLAV) traverse the membrane as a helical segment. Residues 134-152 (ERYIVVCKPMGSFKFSASH) are Cytoplasmic-facing. Residues 153 to 176 (AFAGCAFTWVMAMACAAPPLVGWS) traverse the membrane as a helical segment. At 177 to 202 (RYIPEGMQCSCGPDYYTLNPEYNNES) the chain is on the extracellular side. N-linked (GlcNAc...) asparagine glycosylation is present at N200. A helical membrane pass occupies residues 203 to 230 (YVLYMFICHFILPVTIIFFTYGRLVCTV). The Cytoplasmic segment spans residues 231 to 252 (KAAAAQQQESESTQKAEREVTR). Residues 253–276 (MVILMVLGFLIAWTPYATVAAWIF) traverse the membrane as a helical segment. Topologically, residues 277-284 (FNKGAAFS) are extracellular. The helical transmembrane segment at 285 to 309 (AQFMAVPAFFSKTSALYNPVIYVLL) threads the bilayer. K296 carries the N6-(retinylidene)lysine modification. Topologically, residues 310–349 (NKQFRNCMLTTLFCGKNPLGDDESSTVSTSKTEVSSVSPA) are cytoplasmic. The segment at 329 to 349 (GDDESSTVSTSKTEVSSVSPA) is disordered. The segment covering 334–349 (STVSTSKTEVSSVSPA) has biased composition (low complexity).

Belongs to the G-protein coupled receptor 1 family. Opsin subfamily. Post-translationally, phosphorylated on some or all of the serine and threonine residues present in the C-terminal region. Retinal double cone accessory photoreceptor cell outer segments.

The protein localises to the membrane. Functionally, visual pigments are the light-absorbing molecules that mediate vision. They consist of an apoprotein, opsin, covalently linked to cis-retinal. In Danio rerio (Zebrafish), this protein is Green-sensitive opsin-4 (opn1mw4).